Here is a 225-residue protein sequence, read N- to C-terminus: 7-carboxy-7-deazaguanine synthase (225 aa).

Residues 14–16 (LQG) and Arg-29 each bind substrate. In terms of domain architecture, Radical SAM core spans 20 to 225 (HFGKSAFFIR…LQTHKWLGVL (206 aa)). Cys-33, Cys-37, and Cys-40 together coordinate [4Fe-4S] cluster. Thr-42 serves as a coordination point for Mg(2+). Thr-77 serves as a coordination point for substrate. S-adenosyl-L-methionine is bound by residues Gly-79 and 127–129 (SPK).

It belongs to the radical SAM superfamily. 7-carboxy-7-deazaguanine synthase family. Homodimer. It depends on [4Fe-4S] cluster as a cofactor. The cofactor is S-adenosyl-L-methionine. Mg(2+) serves as cofactor.

It carries out the reaction 6-carboxy-5,6,7,8-tetrahydropterin + H(+) = 7-carboxy-7-deazaguanine + NH4(+). The protein operates within purine metabolism; 7-cyano-7-deazaguanine biosynthesis. Catalyzes the complex heterocyclic radical-mediated conversion of 6-carboxy-5,6,7,8-tetrahydropterin (CPH4) to 7-carboxy-7-deazaguanine (CDG), a step common to the biosynthetic pathways of all 7-deazapurine-containing compounds. This chain is 7-carboxy-7-deazaguanine synthase, found in Prochlorococcus marinus (strain SARG / CCMP1375 / SS120).